The primary structure comprises 503 residues: Depupylase (503 aa).

Residues Glu8 and Tyr92 each coordinate Mg(2+). Asp94 acts as the Proton acceptor in catalysis. Position 99 (Glu99) interacts with Mg(2+). ATP is bound at residue Ser101 to Thr102. His155 is a binding site for Mg(2+). 2 residues coordinate ATP: Asn157 and Arg239. Mg(2+) is bound at residue His241.

The protein belongs to the Pup ligase/Pup deamidase family. Pup deamidase subfamily. In terms of assembly, likely interacts with the C-terminal half of the prokaryotic ubiquitin-like protein Pup. The cofactor is ATP.

It participates in protein degradation; proteasomal Pup-dependent pathway. Its function is as follows. Displays depupylase (DPUP) activity, removing conjugated Pup from target proteins; is thus involved in the recycling of Pup and may function similarly to deubiquitinases (DUBs) in eukaryotes to prevent or promote proteasomal degradation of certain proteins. Is also able to catalyze the deamidation of the C-terminal glutamine to glutamate in a variant of the prokaryotic ubiquitin-like protein Pup; however, since Pup from A.cellulolyticus possesses a C-terminal glutamate, this deamidase activity may be of no significance in vivo. The polypeptide is Depupylase (dop) (Acidothermus cellulolyticus (strain ATCC 43068 / DSM 8971 / 11B)).